The primary structure comprises 135 residues: Large ribosomal subunit protein uL18 (135 aa).

The interval 1–23 (MAQTQADTAARKPVGQSVSATRR) is disordered.

It belongs to the universal ribosomal protein uL18 family. Part of the 50S ribosomal subunit; part of the 5S rRNA/L5/L18/L25 subcomplex. Contacts the 5S and 23S rRNAs.

In terms of biological role, this is one of the proteins that bind and probably mediate the attachment of the 5S RNA into the large ribosomal subunit, where it forms part of the central protuberance. The protein is Large ribosomal subunit protein uL18 of Mycobacterium marinum (strain ATCC BAA-535 / M).